A 478-amino-acid polypeptide reads, in one-letter code: DNA-directed RNA polymerase II subunit RPB1 (478 aa).

Zn(2+) contacts are provided by C68, C71, C78, H81, C108, C111, and C149. Residues D474 and D476 each contribute to the Mg(2+) site.

The protein belongs to the RNA polymerase beta' chain family. As to quaternary structure, component of the RNA polymerase II (Pol II) complex consisting of 12 subunits. Post-translationally, phosphorylation activates POL II.

The protein localises to the nucleus. The catalysed reaction is RNA(n) + a ribonucleoside 5'-triphosphate = RNA(n+1) + diphosphate. Functionally, DNA-dependent RNA polymerase catalyzes the transcription of DNA into RNA using the four ribonucleoside triphosphates as substrates. Largest and catalytic component of RNA polymerase II which synthesizes mRNA precursors and many functional non-coding RNAs. Forms the polymerase active center together with the second largest subunit. Pol II is the central component of the basal RNA polymerase II transcription machinery. It is composed of mobile elements that move relative to each other. RPB1 is part of the core element with the central large cleft, the clamp element that moves to open and close the cleft and the jaws that are thought to grab the incoming DNA template. At the start of transcription, a single-stranded DNA template strand of the promoter is positioned within the central active site cleft of Pol II. A bridging helix emanates from RPB1 and crosses the cleft near the catalytic site and is thought to promote translocation of Pol II by acting as a ratchet that moves the RNA-DNA hybrid through the active site by switching from straight to bent conformations at each step of nucleotide addition. During transcription elongation, Pol II moves on the template as the transcript elongates. Elongation is influenced by the phosphorylation status of the C-terminal domain (CTD) of Pol II largest subunit (RPB1), which serves as a platform for assembly of factors that regulate transcription initiation, elongation, termination and mRNA processing. The polypeptide is DNA-directed RNA polymerase II subunit RPB1 (RPB1) (Euplotoides octocarinatus (Freshwater ciliate)).